We begin with the raw amino-acid sequence, 59 residues long: Large ribosomal subunit protein uL30 (59 aa).

The protein belongs to the universal ribosomal protein uL30 family. Part of the 50S ribosomal subunit.

This is Large ribosomal subunit protein uL30 from Acetivibrio thermocellus (strain ATCC 27405 / DSM 1237 / JCM 9322 / NBRC 103400 / NCIMB 10682 / NRRL B-4536 / VPI 7372) (Clostridium thermocellum).